The primary structure comprises 140 residues: Transcription antitermination protein NusB (140 aa).

This sequence belongs to the NusB family.

Involved in transcription antitermination. Required for transcription of ribosomal RNA (rRNA) genes. Binds specifically to the boxA antiterminator sequence of the ribosomal RNA (rrn) operons. This chain is Transcription antitermination protein NusB, found in Myxococcus xanthus (strain DK1622).